The sequence spans 96 residues: Small ribosomal subunit protein bS18 (96 aa).

The protein belongs to the bacterial ribosomal protein bS18 family. Part of the 30S ribosomal subunit. Forms a tight heterodimer with protein bS6.

Functionally, binds as a heterodimer with protein bS6 to the central domain of the 16S rRNA, where it helps stabilize the platform of the 30S subunit. In Borreliella burgdorferi (strain ATCC 35210 / DSM 4680 / CIP 102532 / B31) (Borrelia burgdorferi), this protein is Small ribosomal subunit protein bS18.